We begin with the raw amino-acid sequence, 128 residues long: Sulfurtransferase TusD (128 aa).

The active-site Cysteine persulfide intermediate is cysteine 78.

It belongs to the DsrE/TusD family. Heterohexamer, formed by a dimer of trimers. The hexameric TusBCD complex contains 2 copies each of TusB, TusC and TusD. The TusBCD complex interacts with TusE.

It localises to the cytoplasm. Its function is as follows. Part of a sulfur-relay system required for 2-thiolation of 5-methylaminomethyl-2-thiouridine (mnm(5)s(2)U) at tRNA wobble positions. Accepts sulfur from TusA and transfers it in turn to TusE. In Buchnera aphidicola subsp. Acyrthosiphon pisum (strain 5A), this protein is Sulfurtransferase TusD.